The chain runs to 611 residues: Conglutin beta 1 (611 aa).

Residues Met-1 to Gly-30 form the signal peptide. 2 stretches are compositionally biased toward basic and acidic residues: residues Lys-32–Ser-82 and Ser-130–Glu-141. Disordered stretches follow at residues Lys-32–Gln-194 and Leu-384–Ser-407. Over residues Gln-142–Gly-151 the composition is skewed to low complexity. Basic and acidic residues predominate over residues Ser-152–Arg-181. In terms of domain architecture, Cupin type-1 1 spans Tyr-186 to Glu-344. Over residues Ser-390–Pro-402 the composition is skewed to low complexity. The region spanning Phe-403 to Glu-569 is the Cupin type-1 2 domain. Asn-434 carries N-linked (GlcNAc...) asparagine glycosylation. Residues Asp-476–Val-495 are disordered. Acidic residues predominate over residues Glu-483 to Glu-492. The N-linked (GlcNAc...) asparagine glycan is linked to Asn-519. The span at Phe-580–Gln-589 shows a compositional bias: low complexity. The disordered stretch occupies residues Phe-580–Arg-600.

It belongs to the 7S seed storage protein family. Component of globulins complexes which accumulate in seeds.

Its function is as follows. Seed storage protein. Accumulates during seed development and is hydrolyzed after germination to provide a carbon and nitrogen source for the developing seedling. This chain is Conglutin beta 1, found in Lupinus angustifolius (Narrow-leaved blue lupine).